Reading from the N-terminus, the 81-residue chain is Penaeidin-3c (81 aa).

The first 19 residues, 1–19 (MRLVVCLVFLASFALVCQG), serve as a signal peptide directing secretion. Q20 carries the post-translational modification Pyrrolidone carboxylic acid. Cystine bridges form between C50–C65, C54–C72, and C66–C73. Residue S80 is modified to Serine amide.

Belongs to the penaeidin family. In terms of tissue distribution, higher expression in hemocytes and to a lesser extent in heart, testis, gills, intestine, lymphoid organ and hepatopancreas. Traces in eyes and subcuticular epithelium. Not present in the brain.

The protein localises to the cytoplasmic granule. Antibacterial activity against M.luteus and E.coli bacteria. Antifungal activity against N.crassa and F.oxysporum. Presents chitin-binding activity. The sequence is that of Penaeidin-3c from Penaeus vannamei (Whiteleg shrimp).